Consider the following 161-residue polypeptide: Putative pre-16S rRNA nuclease (161 aa).

The protein belongs to the YqgF nuclease family.

The protein localises to the cytoplasm. In terms of biological role, could be a nuclease involved in processing of the 5'-end of pre-16S rRNA. The polypeptide is Putative pre-16S rRNA nuclease (Bartonella bacilliformis (strain ATCC 35685 / KC583 / Herrer 020/F12,63)).